We begin with the raw amino-acid sequence, 302 residues long: Putative 2-dehydro-3-deoxy-D-gluconate aldolase YagE (302 aa).

Active-site charge relay system residues include serine 49 and tyrosine 112. The Proton donor role is filled by tyrosine 138. Residue lysine 167 is the Schiff-base intermediate with substrate of the active site.

This sequence belongs to the DapA family. As to quaternary structure, a dimer of dimers.

The protein resides in the cytoplasm. It catalyses the reaction 2-dehydro-3-deoxy-D-gluconate = D-glyceraldehyde + pyruvate. The catalysed reaction is 2-dehydro-3-deoxy-D-arabinonate = glycolaldehyde + pyruvate. Functionally, catalyzes the formation of 2-keto-3-deoxy-gluconate (KDG) from pyruvate and glyceraldehyde. May also function as a 2-dehydro-3-deoxy-D-pentonate aldolase. Overexpression leads to increased growth (over 2 hours) in the presence of the antibiotics norfloxacin, ampicillin and streptomycin. This chain is Putative 2-dehydro-3-deoxy-D-gluconate aldolase YagE (yagE), found in Escherichia coli (strain K12).